A 445-amino-acid chain; its full sequence is Glucose-6-phosphate isomerase (445 aa).

The active-site Proton donor is Glu-287. Catalysis depends on residues His-308 and Lys-422.

The protein belongs to the GPI family.

The protein localises to the cytoplasm. It carries out the reaction alpha-D-glucose 6-phosphate = beta-D-fructose 6-phosphate. It participates in carbohydrate biosynthesis; gluconeogenesis. It functions in the pathway carbohydrate degradation; glycolysis; D-glyceraldehyde 3-phosphate and glycerone phosphate from D-glucose: step 2/4. Its function is as follows. Catalyzes the reversible isomerization of glucose-6-phosphate to fructose-6-phosphate. The polypeptide is Glucose-6-phosphate isomerase (Bacteroides fragilis (strain ATCC 25285 / DSM 2151 / CCUG 4856 / JCM 11019 / LMG 10263 / NCTC 9343 / Onslow / VPI 2553 / EN-2)).